The chain runs to 226 residues: UPF0319 protein SO_1816 (226 aa).

An N-terminal signal peptide occupies residues 1 to 21; it reads MKSLLPISSLLVLLGSASVSA.

Belongs to the UPF0319 family.

This Shewanella oneidensis (strain ATCC 700550 / JCM 31522 / CIP 106686 / LMG 19005 / NCIMB 14063 / MR-1) protein is UPF0319 protein SO_1816.